Here is a 760-residue protein sequence, read N- to C-terminus: Xaa-Pro dipeptidyl-peptidase (760 aa).

Catalysis depends on charge relay system residues Ser349, Asp469, and His499.

Belongs to the peptidase S15 family. Homodimer.

Its subcellular location is the cytoplasm. The enzyme catalyses Hydrolyzes Xaa-Pro-|- bonds to release unblocked, N-terminal dipeptides from substrates including Ala-Pro-|-p-nitroanilide and (sequentially) Tyr-Pro-|-Phe-Pro-|-Gly-Pro-|-Ile.. In terms of biological role, removes N-terminal dipeptides sequentially from polypeptides having unsubstituted N-termini provided that the penultimate residue is proline. The polypeptide is Xaa-Pro dipeptidyl-peptidase (Streptococcus pyogenes serotype M12 (strain MGAS9429)).